The primary structure comprises 354 residues: Uroporphyrinogen decarboxylase (354 aa).

Substrate-binding positions include R27–R31, D77, Y154, T209, and H327.

Belongs to the uroporphyrinogen decarboxylase family. As to quaternary structure, homodimer.

It is found in the cytoplasm. The enzyme catalyses uroporphyrinogen III + 4 H(+) = coproporphyrinogen III + 4 CO2. The protein operates within porphyrin-containing compound metabolism; protoporphyrin-IX biosynthesis; coproporphyrinogen-III from 5-aminolevulinate: step 4/4. Catalyzes the decarboxylation of four acetate groups of uroporphyrinogen-III to yield coproporphyrinogen-III. This is Uroporphyrinogen decarboxylase from Histophilus somni (strain 129Pt) (Haemophilus somnus).